The following is a 513-amino-acid chain: Trigger factor (513 aa).

A PPIase FKBP-type domain is found at 164–249 (GDQIIIDFLG…VKAVKNAGEF (86 aa)). Positions 436 to 513 (QAAIEAEEGA…KAPAKKKAEG (78 aa)) are disordered. A compositionally biased stretch (basic residues) spans 452–461 (AKKAPAKKKA). The span at 489-498 (ADEAPAAEEA) shows a compositional bias: low complexity. Residues 501-513 (AKKKAPAKKKAEG) are compositionally biased toward basic residues.

The protein belongs to the FKBP-type PPIase family. Tig subfamily.

It is found in the cytoplasm. The enzyme catalyses [protein]-peptidylproline (omega=180) = [protein]-peptidylproline (omega=0). In terms of biological role, involved in protein export. Acts as a chaperone by maintaining the newly synthesized protein in an open conformation. Functions as a peptidyl-prolyl cis-trans isomerase. The polypeptide is Trigger factor (Novosphingobium aromaticivorans (strain ATCC 700278 / DSM 12444 / CCUG 56034 / CIP 105152 / NBRC 16084 / F199)).